A 207-amino-acid polypeptide reads, in one-letter code: Small ribosomal subunit protein uS4 (207 aa).

The segment at K31–G53 is disordered. The S4 RNA-binding domain maps to S97 to L160.

The protein belongs to the universal ribosomal protein uS4 family. As to quaternary structure, part of the 30S ribosomal subunit. Contacts protein S5. The interaction surface between S4 and S5 is involved in control of translational fidelity.

Its function is as follows. One of the primary rRNA binding proteins, it binds directly to 16S rRNA where it nucleates assembly of the body of the 30S subunit. Functionally, with S5 and S12 plays an important role in translational accuracy. The chain is Small ribosomal subunit protein uS4 from Albidiferax ferrireducens (strain ATCC BAA-621 / DSM 15236 / T118) (Rhodoferax ferrireducens).